The sequence spans 302 residues: Probable lipid kinase YegS-like (302 aa).

A DAGKc domain is found at 1–129 (MDKDKVLLVL…IDLGEVNGKL (129 aa)). ATP contacts are provided by residues threonine 39, 65–71 (GDGTLRE), and threonine 92. Positions 210, 213, and 215 each coordinate Mg(2+). Glutamate 268 functions as the Proton acceptor in the catalytic mechanism.

The protein belongs to the diacylglycerol/lipid kinase family. YegS lipid kinase subfamily. The cofactor is Mg(2+). Ca(2+) serves as cofactor.

Its subcellular location is the cytoplasm. Its function is as follows. Probably phosphorylates lipids; the in vivo substrate is unknown. This is Probable lipid kinase YegS-like from Pseudomonas aeruginosa (strain ATCC 15692 / DSM 22644 / CIP 104116 / JCM 14847 / LMG 12228 / 1C / PRS 101 / PAO1).